A 205-amino-acid chain; its full sequence is Adenylyl-sulfate kinase (205 aa).

31–38 (GLSGSGKS) is an ATP binding site. The active-site Phosphoserine intermediate is the S105.

The protein belongs to the APS kinase family.

The catalysed reaction is adenosine 5'-phosphosulfate + ATP = 3'-phosphoadenylyl sulfate + ADP + H(+). The protein operates within sulfur metabolism; hydrogen sulfide biosynthesis; sulfite from sulfate: step 2/3. Functionally, catalyzes the synthesis of activated sulfate. This chain is Adenylyl-sulfate kinase, found in Shewanella halifaxensis (strain HAW-EB4).